We begin with the raw amino-acid sequence, 476 residues long: UDP-N-acetylmuramate--L-alanine ligase (476 aa).

107–113 (GTHGKTT) is an ATP binding site.

It belongs to the MurCDEF family.

It localises to the cytoplasm. The enzyme catalyses UDP-N-acetyl-alpha-D-muramate + L-alanine + ATP = UDP-N-acetyl-alpha-D-muramoyl-L-alanine + ADP + phosphate + H(+). The protein operates within cell wall biogenesis; peptidoglycan biosynthesis. Its function is as follows. Cell wall formation. The chain is UDP-N-acetylmuramate--L-alanine ligase from Roseiflexus castenholzii (strain DSM 13941 / HLO8).